The sequence spans 616 residues: Dihydroxy-acid dehydratase (616 aa).

Residue D81 participates in Mg(2+) binding. C122 is a [2Fe-2S] cluster binding site. Mg(2+) is bound by residues D123 and K124. K124 bears the N6-carboxylysine mark. Residue C195 participates in [2Fe-2S] cluster binding. E491 is a Mg(2+) binding site. Residue S517 is the Proton acceptor of the active site.

Belongs to the IlvD/Edd family. As to quaternary structure, homodimer. Requires [2Fe-2S] cluster as cofactor. The cofactor is Mg(2+).

The enzyme catalyses (2R)-2,3-dihydroxy-3-methylbutanoate = 3-methyl-2-oxobutanoate + H2O. It catalyses the reaction (2R,3R)-2,3-dihydroxy-3-methylpentanoate = (S)-3-methyl-2-oxopentanoate + H2O. It participates in amino-acid biosynthesis; L-isoleucine biosynthesis; L-isoleucine from 2-oxobutanoate: step 3/4. It functions in the pathway amino-acid biosynthesis; L-valine biosynthesis; L-valine from pyruvate: step 3/4. In terms of biological role, functions in the biosynthesis of branched-chain amino acids. Catalyzes the dehydration of (2R,3R)-2,3-dihydroxy-3-methylpentanoate (2,3-dihydroxy-3-methylvalerate) into 2-oxo-3-methylpentanoate (2-oxo-3-methylvalerate) and of (2R)-2,3-dihydroxy-3-methylbutanoate (2,3-dihydroxyisovalerate) into 2-oxo-3-methylbutanoate (2-oxoisovalerate), the penultimate precursor to L-isoleucine and L-valine, respectively. This is Dihydroxy-acid dehydratase from Sodalis glossinidius (strain morsitans).